The chain runs to 479 residues: Transcription factor CP2-like protein 1 (479 aa).

Residues 43–280 (RLPPLQYVLC…PSPSYNGSPN (238 aa)) enclose the Grh/CP2 DB domain. Disordered stretches follow at residues 219–245 (KPKG…KEKY) and 271–301 (PSPS…LPVG). Residues 221–245 (KGADRKQKTDREKMEKRTAQEKEKY) are compositionally biased toward basic and acidic residues. An SAM2-like domain region spans residues 261–365 (PDVAYQVNSA…IRLFNAIKGR (105 aa)). Residues 271-281 (PSPSYNGSPNS) are compositionally biased toward polar residues.

It belongs to the grh/CP2 family. CP2 subfamily. In terms of assembly, forms homohexamers via its SAM-like domain. Interacts with MTA1; which is indispensable for TFCP2l1-mediated self-renewal-promoting effect and endoderm-inhibiting action. Highly expressed in placental JEG-3 cells and very low levels of expression in non-steroidogenic cells. No expression was seen in adrenal NCI-H295A cells or in adrenal tissue.

The protein localises to the nucleus. Transcription factor that facilitates establishment and maintenance of pluripotency in embryonic stem cells (ESCs). With KLF2, acts as the major effector of self-renewal that mediates induction of pluripotency downstream of LIF/STAT3 and Wnt/beta-catenin signaling. Required for normal duct development in the salivary gland and kidney. Coordinates the development of the kidney collecting ducts intercalated (IC) and principal (PC) cells, which regulate acid-base and salt-water homeostasis, respectively. Regulates the expression of IC genes including subunits B1 and D2 of the V-ATPase complex, OXGR1, CA12, SLC4A1, AQP6 and IC-specific transcription factor FOXI1. Also regulates the expression of JAG1 and subsequent notch signaling in the collecting duct. JAG1 initiates notch signaling in PCs but inhibits notch signaling in ICs. Acts as a transcriptional suppressor that may suppress UBP1-mediated transcriptional activation. Modulates the placental expression of CYP11A1. The chain is Transcription factor CP2-like protein 1 (TFCP2L1) from Homo sapiens (Human).